Consider the following 31-residue polypeptide: MESFAYVLILTLAIATLFFAIAFRDPPKIGK.

A helical transmembrane segment spans residues 3–23 (SFAYVLILTLAIATLFFAIAF).

Belongs to the PsbT family. As to quaternary structure, PSII is composed of 1 copy each of membrane proteins PsbA, PsbB, PsbC, PsbD, PsbE, PsbF, PsbH, PsbI, PsbJ, PsbK, PsbL, PsbM, PsbT, PsbX, PsbY, PsbZ, Psb30/Ycf12, peripheral proteins PsbO, CyanoQ (PsbQ), PsbU, PsbV and a large number of cofactors. It forms dimeric complexes.

It localises to the cellular thylakoid membrane. In terms of biological role, found at the monomer-monomer interface of the photosystem II (PS II) dimer, plays a role in assembly and dimerization of PSII. PSII is a light-driven water plastoquinone oxidoreductase, using light energy to abstract electrons from H(2)O, generating a proton gradient subsequently used for ATP formation. The protein is Photosystem II reaction center protein T of Parasynechococcus marenigrum (strain WH8102).